Reading from the N-terminus, the 282-residue chain is Putative phosphite transport system permease protein HtxC (282 aa).

A run of 4 helical transmembrane segments spans residues 23-43, 81-101, 130-150, and 239-259; these read HFATSVVVLSLLAVAWYVCQI, LAMATIGTIFATIIAFPLALM, VYALVFVAAVGFGPFSGVLAI, and FNKMITVLAVVLLMVSAIDFI. The 184-residue stretch at 77–260 folds into the ABC transmembrane type-1 domain; it reads AGETLAMATI…LMVSAIDFIS (184 aa).

It belongs to the binding-protein-dependent transport system permease family.

Its subcellular location is the cell inner membrane. In terms of biological role, probably forms part of a binding-protein-dependent hypophosphite transporter. The protein is Putative phosphite transport system permease protein HtxC (htxC) of Stutzerimonas stutzeri (Pseudomonas stutzeri).